Reading from the N-terminus, the 485-residue chain is Iroquois-class homeodomain protein IRX-4 (485 aa).

The homeobox; TALE-type DNA-binding region spans 142-203; the sequence is GTRRKNATRE…NARRRLKKEN (62 aa). A disordered region spans residues 206–313; it reads TWPPRNKCSD…EEEEAAERAR (108 aa). Over residues 221–232 the composition is skewed to acidic residues; that stretch reads EEEEEEEEECSQ. The span at 234–253 shows a compositional bias: basic and acidic residues; it reads DAMKSEKAEEPTGKEEKELE. Positions 254–269 are enriched in acidic residues; it reads LSDLEDLDAAESESSE. The segment covering 282-294 has biased composition (pro residues); the sequence is HPLPGGGPPPRAA.

It belongs to the TALE/IRO homeobox family. As to expression, ventricles of the heart, developing feather buds, retina, hindbrain.

Its subcellular location is the nucleus. In terms of biological role, regulates the chamber-specific expression of myosin isoforms by activating the expression of the ventricle myosin heavy chain-1 (Vmhc1) and suppressing the expression of the atrial myosin heavy chain-1 (Amhc1) in the ventricles. May play a critical role in establishing chamber-specific gene expression in the developing heart. This chain is Iroquois-class homeodomain protein IRX-4 (IRX4), found in Gallus gallus (Chicken).